Here is a 444-residue protein sequence, read N- to C-terminus: Phosphoribosylamine--glycine ligase (444 aa).

An ATP-grasp domain is found at 109–324 (RNLFKKYEID…FLDVCFAIAE (216 aa)). Residue 140 to 202 (MTSLGKDVVV…EEKLVGVEFT (63 aa)) participates in ATP binding. 3 residues coordinate Mg(2+): glutamine 282, glutamate 294, and asparagine 296. Mn(2+) contacts are provided by glutamine 282, glutamate 294, and asparagine 296.

It belongs to the GARS family. Mg(2+) serves as cofactor. The cofactor is Mn(2+).

The catalysed reaction is 5-phospho-beta-D-ribosylamine + glycine + ATP = N(1)-(5-phospho-beta-D-ribosyl)glycinamide + ADP + phosphate + H(+). The protein operates within purine metabolism; IMP biosynthesis via de novo pathway; N(1)-(5-phospho-D-ribosyl)glycinamide from 5-phospho-alpha-D-ribose 1-diphosphate: step 2/2. This Methanococcus maripaludis (strain DSM 14266 / JCM 13030 / NBRC 101832 / S2 / LL) protein is Phosphoribosylamine--glycine ligase.